A 463-amino-acid chain; its full sequence is Heterogeneous nuclear ribonucleoprotein K (463 aa).

Methionine 1 is modified (N-acetylmethionine). Residues 1 to 37 (METEQPEETFPNTETNGEFGKRPAEDMEEEQAFKRSR) are disordered. A necessary for interaction with DDX1 region spans residues 1–276 (METEQPEETF…GRGGRPMPPS (276 aa)). Positions 19 to 37 (FGKRPAEDMEEEQAFKRSR) are enriched in basic and acidic residues. An N6-acetyllysine; alternate modification is found at lysine 34. Lysine 34 is covalently cross-linked (Glycyl lysine isopeptide (Lys-Gly) (interchain with G-Cter in SUMO1); alternate). Lysine 34 participates in a covalent cross-link: Glycyl lysine isopeptide (Lys-Gly) (interchain with G-Cter in SUMO2); alternate. Residue serine 36 is modified to Phosphoserine. Threonine 39 carries the phosphothreonine modification. The KH 1 domain maps to 42–104 (MVELRILLQS…ETIGEILKKI (63 aa)). Residues lysine 52 and lysine 60 each participate in a glycyl lysine isopeptide (Lys-Gly) (interchain with G-Cter in SUMO2) cross-link. 2 consecutive repeat copies span residues 54–76 (AGAV…NASV) and 59–62 (GKGG). The tract at residues 54–421 (AGAVIGKGGK…QIRHESGASI (368 aa)) is 2 X 22 AA approximate repeats. The tract at residues 59 to 407 (GKGGKNIKAL…LAGSIIGKGG (349 aa)) is 5 X 4 AA repeats of G-X-G-G. A phosphoserine mark is found at serine 75 and serine 116. Residues 144-209 (DCELRLLIHQ…DRVVECIKII (66 aa)) enclose the KH 2 domain. A Glycyl lysine isopeptide (Lys-Gly) (interchain with G-Cter in SUMO1); alternate cross-link involves residue lysine 163. A Glycyl lysine isopeptide (Lys-Gly) (interchain with G-Cter in SUMO2); alternate cross-link involves residue lysine 163. Lysine 198 bears the N6-acetyllysine mark. Residues 209–337 (ILDLISESPI…RPGDRYDGMV (129 aa)) form an interaction with ZIK1 region. Serine 214 and serine 216 each carry phosphoserine. Lysine 219 is covalently cross-linked (Glycyl lysine isopeptide (Lys-Gly) (interchain with G-Cter in SUMO2); alternate). Lysine 219 is subject to N6-succinyllysine; alternate. The RNA-binding RGG-box stretch occupies residues 236–273 (YGGFTMMFDDRRGRPVGFPMRGRGGFDRMPPGRGGRPM). 3 repeat units span residues 245–250 (DRRGRP), 257–260 (GRGG), and 267–270 (GRGG). The segment at 245-329 (DRRGRPVGFP…LMAYDRRGRP (85 aa)) is 2 X 6 AA repeats of D-R-R-G-R-P. The disordered stretch occupies residues 250-329 (PVGFPMRGRG…LMAYDRRGRP (80 aa)). Residues 252–266 (GFPMRGRGGFDRMPP) show a composition bias toward low complexity. Positions 276–285 (SRRDYDDMSP) are enriched in basic and acidic residues. Serine 284 bears the Phosphoserine mark. One copy of the 3-4 repeat lies at 295 to 298 (GRGG). Omega-N-methylarginine is present on arginine 316. One copy of the 2-2 repeat lies at 324–329 (DRRGRP). At arginine 377 the chain carries Omega-N-methylarginine. Residue serine 379 is modified to Phosphoserine. Tyrosine 380 carries the post-translational modification Phosphotyrosine. In terms of domain architecture, KH 3 spans 387–451 (IITTQVTIPK…DQIQNAQYLL (65 aa)). 2 tandem repeats follow at residues 399 to 421 (AGSI…GASI) and 404 to 407 (GKGG). Lysine 405 is subject to N6-acetyllysine; alternate. Lysine 405 is covalently cross-linked (Glycyl lysine isopeptide (Lys-Gly) (interchain with G-Cter in SUMO2); alternate). Serine 420 is modified (phosphoserine). Lysine 422 is covalently cross-linked (Glycyl lysine isopeptide (Lys-Gly) (interchain with G-Cter in SUMO1); alternate). Residue lysine 422 forms a Glycyl lysine isopeptide (Lys-Gly) (interchain with G-Cter in SUMO2); alternate linkage. Residue lysine 422 forms a Glycyl lysine isopeptide (Lys-Gly) (interchain with G-Cter in SUMO); alternate linkage.

Identified in the spliceosome C complex. Interacts with ANKRD28, RBM42 and ZIK1. Interacts with DDX1. Interacts with MDM2; this interaction leads to ubiquitination and proteasomal degradation. Interacts with p53/TP53. Interacts with BRDT. Interacts with IVNS1ABP. Interacts with PPIA/CYPA. Part of a transcription inhibitory ribonucleoprotein complex composed at least of the circular RNA circZNF827, ZNF827 and HNRNPL. Post-translationally, sumoylated by CBX4. Sumoylation is increased upon DNA damage, such as that produced by doxorubicin, etoposide, UV light and camptothecin, due to enhanced CBX4 phosphorylation by HIPK2 under these conditions. In terms of processing, ubiquitinated by MDM2. Doxorubicin treatment does not affect monoubiquitination, but slightly decreases HNRNPK poly-ubiquitination. O-glycosylated (O-GlcNAcylated), in a cell cycle-dependent manner.

It is found in the cytoplasm. It localises to the nucleus. The protein localises to the nucleoplasm. The protein resides in the cell projection. Its subcellular location is the podosome. Its function is as follows. One of the major pre-mRNA-binding proteins. Binds tenaciously to poly(C) sequences. Likely to play a role in the nuclear metabolism of hnRNAs, particularly for pre-mRNAs that contain cytidine-rich sequences. Can also bind poly(C) single-stranded DNA. Plays an important role in p53/TP53 response to DNA damage, acting at the level of both transcription activation and repression. When sumoylated, acts as a transcriptional coactivator of p53/TP53, playing a role in p21/CDKN1A and 14-3-3 sigma/SFN induction. As far as transcription repression is concerned, acts by interacting with long intergenic RNA p21 (lincRNA-p21), a non-coding RNA induced by p53/TP53. This interaction is necessary for the induction of apoptosis, but not cell cycle arrest. As part of a ribonucleoprotein complex composed at least of ZNF827, HNRNPL and the circular RNA circZNF827 that nucleates the complex on chromatin, may negatively regulate the transcription of genes involved in neuronal differentiation. This chain is Heterogeneous nuclear ribonucleoprotein K (HNRNPK), found in Oryctolagus cuniculus (Rabbit).